Reading from the N-terminus, the 299-residue chain is Oxygen-dependent coproporphyrinogen-III oxidase (299 aa).

S92 is a substrate binding site. Residues H96 and H106 each contribute to the a divalent metal cation site. H106 (proton donor) is an active-site residue. 108–110 (NVR) contacts substrate. Residues H145 and H175 each coordinate a divalent metal cation. The important for dimerization stretch occupies residues 240 to 275 (YVEFNLVWDRGTLFGLQTGGRTESILMSMPPLVRWE). 258 to 260 (GGR) provides a ligand contact to substrate.

Belongs to the aerobic coproporphyrinogen-III oxidase family. Homodimer. A divalent metal cation is required as a cofactor.

It localises to the cytoplasm. It carries out the reaction coproporphyrinogen III + O2 + 2 H(+) = protoporphyrinogen IX + 2 CO2 + 2 H2O. Its pathway is porphyrin-containing compound metabolism; protoporphyrin-IX biosynthesis; protoporphyrinogen-IX from coproporphyrinogen-III (O2 route): step 1/1. Involved in the heme biosynthesis. Catalyzes the aerobic oxidative decarboxylation of propionate groups of rings A and B of coproporphyrinogen-III to yield the vinyl groups in protoporphyrinogen-IX. The polypeptide is Oxygen-dependent coproporphyrinogen-III oxidase (Salmonella arizonae (strain ATCC BAA-731 / CDC346-86 / RSK2980)).